Consider the following 445-residue polypeptide: GTPase Der (445 aa).

EngA-type G domains follow at residues 3–167 (PVIA…YAGQ) and 180–353 (IKIA…AAAM). GTP is bound by residues 9–16 (GRPNVGKS), 56–60 (DTGGF), 119–122 (NKAE), 186–193 (GRPNVGKS), 233–237 (DTAGL), and 298–301 (NKWD). The region spanning 354–438 (AKLPTPKLTR…PLRIEFRSSN (85 aa)) is the KH-like domain.

It belongs to the TRAFAC class TrmE-Era-EngA-EngB-Septin-like GTPase superfamily. EngA (Der) GTPase family. In terms of assembly, associates with the 50S ribosomal subunit.

Its function is as follows. GTPase that plays an essential role in the late steps of ribosome biogenesis. The sequence is that of GTPase Der from Burkholderia cenocepacia (strain HI2424).